Consider the following 877-residue polypeptide: Probable Ras GTPase-activating-like protein ngap (877 aa).

Residues 72–218 (TPSATYESLI…KDQKERELWF (147 aa)) enclose the C2 domain. The tract at residues 350–456 (SDDGDISGLK…ETINLSSSIN (107 aa)) is disordered. Low complexity predominate over residues 389–409 (TTATTTPSSTPSTPISPSSQS). Polar residues predominate over residues 410 to 425 (NNIKTPDSKTRSSSNA). Composition is skewed to low complexity over residues 426 to 438 (STNT…KSTG) and 447 to 456 (ETINLSSSIN). Residues 591–802 (GKCLYLLKSL…ENMKSFINTL (212 aa)) form the Ras-GAP domain. The stretch at 820–848 (LEKELACLYRHLIKQRQDMAEEMESTESE) forms a coiled coil.

In terms of biological role, may function as a Ras GTPase-activating protein. This Dictyostelium discoideum (Social amoeba) protein is Probable Ras GTPase-activating-like protein ngap (ngap).